The primary structure comprises 365 residues: Aminomethyltransferase (365 aa).

This sequence belongs to the GcvT family. The glycine cleavage system is composed of four proteins: P, T, L and H.

The enzyme catalyses N(6)-[(R)-S(8)-aminomethyldihydrolipoyl]-L-lysyl-[protein] + (6S)-5,6,7,8-tetrahydrofolate = N(6)-[(R)-dihydrolipoyl]-L-lysyl-[protein] + (6R)-5,10-methylene-5,6,7,8-tetrahydrofolate + NH4(+). In terms of biological role, the glycine cleavage system catalyzes the degradation of glycine. The chain is Aminomethyltransferase from Synechococcus sp. (strain CC9902).